Consider the following 186-residue polypeptide: Transcription factor FapR (186 aa).

In terms of domain architecture, MaoC-like spans 98–168 (FTKTQIARGH…YVIEVNSYVR (71 aa)).

The protein belongs to the FapR family.

In terms of biological role, transcriptional factor involved in regulation of membrane lipid biosynthesis by repressing genes involved in fatty acid and phospholipid metabolism. The chain is Transcription factor FapR from Staphylococcus haemolyticus (strain JCSC1435).